The chain runs to 239 residues: Tetrahydromethanopterin S-methyltransferase subunit A (239 aa).

At 1-215 (MANKKSPAAT…EAAMIAKFNS (215 aa)) the chain is on the cytoplasmic side. H85 is a 5-hydroxybenzimidazolylcob(I)amide binding site. A helical membrane pass occupies residues 216 to 238 (GYYNGKIQGIAIGLFLSILVFSL). L239 is a topological domain (extracellular).

This sequence belongs to the MtrA family. The complex is composed of 8 subunits; MtrA, MtrB, MtrC, MtrD, MtrE, MtrF, MtrG and MtrH. 5-hydroxybenzimidazolylcob(I)amide serves as cofactor.

The protein localises to the cell membrane. It catalyses the reaction 5-methyl-5,6,7,8-tetrahydromethanopterin + coenzyme M + 2 Na(+)(in) = 5,6,7,8-tetrahydromethanopterin + methyl-coenzyme M + 2 Na(+)(out). It functions in the pathway one-carbon metabolism; methanogenesis from CO(2); methyl-coenzyme M from 5,10-methylene-5,6,7,8-tetrahydromethanopterin: step 2/2. In terms of biological role, part of a complex that catalyzes the formation of methyl-coenzyme M and tetrahydromethanopterin from coenzyme M and methyl-tetrahydromethanopterin. This is an energy-conserving, sodium-ion translocating step. In Methanococcus maripaludis (strain C7 / ATCC BAA-1331), this protein is Tetrahydromethanopterin S-methyltransferase subunit A.